A 766-amino-acid polypeptide reads, in one-letter code: Protein zer-1 homolog (766 aa).

Position 2 is an N-acetylalanine (A2). LRR repeat units lie at residues 226–245, 246–268, and 278–302; these read SLVL…IVQL, HKLR…KLTR, and LGNL…KMEE. ARM repeat units follow at residues 427–467, 511–556, 558–600, 602–643, and 714–756; these read RSEQ…NFSI, DNDH…NITD, TPDN…NVAE, KELR…HIMF, and PDKY…HCSN.

The protein belongs to the zyg-11 family. Interacts with the ELOC-ELOB/Elongin BC complex. Part of an E3 ubiquitin ligase complex including ZER1, CUL2 and Elongin BC. As to expression, expressed in testis, spermatocytes and spermatids (at protein level). Expressed in spermatocytes, spermatids, prostate, skeletal muscle, ovary, small intestine, heart, brain and pancreas.

Serves as substrate adapter subunit in the E3 ubiquitin ligase complex ZYG11B-CUL2-Elongin BC. Acts to target substrates bearing N-terminal degrons for proteasomal degradation with the first four residues of substrates being the key recognition elements. Involved in the clearance of proteolytic fragments generated by caspase cleavage during apoptosis since N-terminal glycine degrons are strongly enriched at caspase cleavage sites. Also important in the quality control of protein N-myristoylation in which N-terminal glycine degrons are conditionally exposed after a failure of N-myristoylation. This is Protein zer-1 homolog from Homo sapiens (Human).